Reading from the N-terminus, the 291-residue chain is Kynurenine formamidase (291 aa).

An HGGXW motif is present at residues His-33–Trp-37. Ser-107 acts as the Nucleophile in catalysis. Active-site residues include Asp-242 and His-280.

This sequence belongs to the kynurenine formamidase family. Homodimer.

It carries out the reaction N-formyl-L-kynurenine + H2O = L-kynurenine + formate + H(+). Its pathway is amino-acid degradation; L-tryptophan degradation via kynurenine pathway; L-kynurenine from L-tryptophan: step 2/2. Catalyzes the hydrolysis of N-formyl-L-kynurenine to L-kynurenine, the second step in the kynurenine pathway of tryptophan degradation. Kynurenine may be further oxidized to nicotinic acid, NAD(H) and NADP(H). Required for elimination of toxic metabolites. In Debaryomyces hansenii (strain ATCC 36239 / CBS 767 / BCRC 21394 / JCM 1990 / NBRC 0083 / IGC 2968) (Yeast), this protein is Kynurenine formamidase.